Reading from the N-terminus, the 407-residue chain is Na(+)-translocating NADH-quinone reductase subunit F (407 aa).

The chain crosses the membrane as a helical span at residues isoleucine 3 to phenylalanine 23. In terms of domain architecture, 2Fe-2S ferredoxin-type spans glycine 32–valine 126. [2Fe-2S] cluster is bound by residues cysteine 69, cysteine 75, cysteine 78, and cysteine 110. The 141-residue stretch at valine 129–lysine 269 folds into the FAD-binding FR-type domain. The catalytic stretch occupies residues aspartate 272–methionine 389.

Belongs to the NqrF family. Composed of six subunits; NqrA, NqrB, NqrC, NqrD, NqrE and NqrF. It depends on [2Fe-2S] cluster as a cofactor. FAD serves as cofactor.

The protein localises to the cell inner membrane. It carries out the reaction a ubiquinone + n Na(+)(in) + NADH + H(+) = a ubiquinol + n Na(+)(out) + NAD(+). Its function is as follows. NQR complex catalyzes the reduction of ubiquinone-1 to ubiquinol by two successive reactions, coupled with the transport of Na(+) ions from the cytoplasm to the periplasm. The first step is catalyzed by NqrF, which accepts electrons from NADH and reduces ubiquinone-1 to ubisemiquinone by a one-electron transfer pathway. The chain is Na(+)-translocating NADH-quinone reductase subunit F from Pasteurella multocida (strain Pm70).